The primary structure comprises 750 residues: MKKNNVNNITETLNSSSSSSSSSGSSSDEEVKSKLNFNQTDEMLKKIKENKFDWALFKRFIKIVIILYEKPVIPLLLFLLLFGSGVSQTYISKFTGILLSNIYGSLTSGDKFLFVSSLIKGCFAIGGSALFDAIIKFIVSIMAWNWRKTLCLYIQNVYFKKSLFYKILAFDDRIDNPDQRITSDIDNFTTLLSSIVSQCITGPMVVVYYTYLCYTTIDWYAPLIVYGYFFLGYFINKLVMSPMVSINYLQDKLEGDFRYLHQRIRNFSESIALYNLSKEKQQKKSTTSVDNLDYYDDDHHYHHHHDDGEESDEYTDKTKIINRKNKNSKNKRSALLKRSNKNIKNEELLVEEEQAKQQFEALLKNKKRVIFWQFGLNTTSDMFTFFSPLINYFIISIPVFFLSSKAALEPAQVTVQSYNCIMLASGFSQYINVSQSISDLSGYISRISTMIEVCKKVMGDTSLDIEITKLNEKDKTKSLPNSLIINNRDTSINTDFRHISLNEGESITLDDVTYFTPKGTQLYEKISICIKKGNNLLIMGPSGSGKSSLIRIINGLWPFFKGSINRPENEDMFFLPQQPYLIFGTLEEQILYPFSKKQKRIPKSIMRELFQRFDIDYLLDRERFIKKSAQVNDLTHNWLNQLSPGEQQLIAIIRLIYHKPKFALMDESTSSIPQSLEERVYSVAKELGITIISVGHRISLLKYHSTLLRFDKDKNWYLEDIINQNNQSNNINTINIDNNTNKIAEDSVFD.

The span at 1 to 14 (MKKNNVNNITETLN) shows a compositional bias: polar residues. The segment at 1 to 32 (MKKNNVNNITETLNSSSSSSSSSGSSSDEEVK) is disordered. Residues 15-26 (SSSSSSSSSGSS) are compositionally biased toward low complexity. A run of 4 helical transmembrane segments spans residues 63 to 83 (IVII…LLFG), 123 to 143 (FAIG…SIMA), 188 to 208 (FTTL…VVVY), and 215 to 235 (TTID…GYFI). The ABC transmembrane type-1 domain occupies 74–362 (PLLLFLLLFG…EQAKQQFEAL (289 aa)). Positions 334–370 (ALLKRSNKNIKNEELLVEEEQAKQQFEALLKNKKRVI) form a coiled coil. A helical transmembrane segment spans residues 382–402 (MFTFFSPLINYFIISIPVFFL). The ABC transporter domain maps to 507–737 (ITLDDVTYFT…SNNINTINID (231 aa)). Residue 540–547 (GPSGSGKS) coordinates ATP.

It belongs to the ABC transporter superfamily. ABCD family. Peroxisomal fatty acyl CoA transporter (TC 3.A.1.203) subfamily.

The protein resides in the membrane. This chain is ABC transporter D family member 3 (abcD3), found in Dictyostelium discoideum (Social amoeba).